We begin with the raw amino-acid sequence, 192 residues long: Orotate phosphoribosyltransferase (192 aa).

Residues R84, K88, and 110 to 118 (DDVLTTGNS) contribute to the 5-phospho-alpha-D-ribose 1-diphosphate site. Orotate is bound by residues T114 and R142.

This sequence belongs to the purine/pyrimidine phosphoribosyltransferase family. PyrE subfamily. Homodimer. The cofactor is Mg(2+).

The enzyme catalyses orotidine 5'-phosphate + diphosphate = orotate + 5-phospho-alpha-D-ribose 1-diphosphate. The protein operates within pyrimidine metabolism; UMP biosynthesis via de novo pathway; UMP from orotate: step 1/2. In terms of biological role, catalyzes the transfer of a ribosyl phosphate group from 5-phosphoribose 1-diphosphate to orotate, leading to the formation of orotidine monophosphate (OMP). The polypeptide is Orotate phosphoribosyltransferase (Pyrobaculum calidifontis (strain DSM 21063 / JCM 11548 / VA1)).